The following is a 93-amino-acid chain: Neutrophil cationic peptide 1 type B (93 aa).

The first 19 residues, 1–19 (MRTVPLFAACLLLTLMAQA), serve as a signal peptide directing secretion. Positions 20 to 62 (EPLPRAADHSDTKMKGDREDHVAVISFWEEESTSLQDAGAGAG) are excised as a propeptide. 3 disulfide bridges follow: C65-C93, C67-C82, and C72-C92.

The protein belongs to the alpha-defensin family. In terms of tissue distribution, bone marrow.

It is found in the secreted. Functionally, has antibiotic, anti-fungi and antiviral activity. In Cavia porcellus (Guinea pig), this protein is Neutrophil cationic peptide 1 type B.